The sequence spans 420 residues: Glucose-1-phosphate adenylyltransferase (420 aa).

Alpha-D-glucose 1-phosphate contacts are provided by residues Tyr107, Gly172, 187–188, and Ser205; that span reads EK.

It belongs to the bacterial/plant glucose-1-phosphate adenylyltransferase family. As to quaternary structure, homotetramer.

The enzyme catalyses alpha-D-glucose 1-phosphate + ATP + H(+) = ADP-alpha-D-glucose + diphosphate. The protein operates within glycan biosynthesis; glycogen biosynthesis. Its function is as follows. Involved in the biosynthesis of ADP-glucose, a building block required for the elongation reactions to produce glycogen. Catalyzes the reaction between ATP and alpha-D-glucose 1-phosphate (G1P) to produce pyrophosphate and ADP-Glc. In Rhizobium leguminosarum bv. trifolii (strain WSM2304), this protein is Glucose-1-phosphate adenylyltransferase.